A 495-amino-acid chain; its full sequence is Geraniol 8-hydroxylase (495 aa).

Residues 5 to 25 traverse the membrane as a helical segment; it reads FLTIAIGFLFTITLYQALNFF. C438 is a binding site for heme.

It belongs to the cytochrome P450 family. It depends on heme as a cofactor. Expressed in leaves, stems and roots.

It localises to the endoplasmic reticulum membrane. It catalyses the reaction (2E)-geraniol + reduced [NADPH--hemoprotein reductase] + O2 = (6E)-8-hydroxygeraniol + oxidized [NADPH--hemoprotein reductase] + H2O + H(+). In terms of biological role, hydroxylase involved in the biosynthesis of hydroxygeraniol, a precursor of the iridoid monoterpenoid swertiamarin. This chain is Geraniol 8-hydroxylase (CYP76B10), found in Swertia mussotii (Felwort).